Consider the following 82-residue polypeptide: Proline, histidine and glycine-rich protein 1 (82 aa).

The disordered stretch occupies residues 20–82 (HCGPPPGHGP…PGHPPPGPHH (63 aa)).

The chain is Proline, histidine and glycine-rich protein 1 (PHGR1) from Homo sapiens (Human).